The sequence spans 314 residues: Vacuolar membrane protein SCRG_03194 (314 aa).

The interval Lys32–Ala60 is disordered. A helical transmembrane segment spans residues Val93–Leu113. Ser148, Ser254, and Ser274 each carry phosphoserine. The interval Glu240–Asn309 is disordered. The span at Ser254–His269 shows a compositional bias: basic and acidic residues.

This sequence belongs to the PRM5 family.

Its subcellular location is the vacuole membrane. The protein is Vacuolar membrane protein SCRG_03194 of Saccharomyces cerevisiae (strain RM11-1a) (Baker's yeast).